A 154-amino-acid polypeptide reads, in one-letter code: Transcriptional repressor NrdR (154 aa).

The segment at 3–34 (CPFCGNENTRVIDTRAAEDGFAIKRRRECENC) is a zinc-finger region. An ATP-cone domain is found at 49 to 139 (LIVVKKDGSK…VYRQFKDVNS (91 aa)).

The protein belongs to the NrdR family. It depends on Zn(2+) as a cofactor.

Negatively regulates transcription of bacterial ribonucleotide reductase nrd genes and operons by binding to NrdR-boxes. The chain is Transcriptional repressor NrdR from Carboxydothermus hydrogenoformans (strain ATCC BAA-161 / DSM 6008 / Z-2901).